Reading from the N-terminus, the 584-residue chain is Pectinesterase 3 (584 aa).

The signal sequence occupies residues 1-50 (MTRIKEFFTKLSESSTNQNISNIPKKKKKLFLALFATLLVVAAVIGIVAG). Residues 51–266 (VNSRKNSGDN…LSTGDRRLLQ (216 aa)) constitute a propeptide that is removed on maturation. Asn108, Asn129, and Asn226 each carry an N-linked (GlcNAc...) asparagine glycan. Substrate is bound by residues Thr348 and Gln378. Asp401 acts as the Proton donor in catalysis. Cys415 and Cys435 are joined by a disulfide. Residue Asp422 is the Nucleophile of the active site. 2 residues coordinate substrate: Arg490 and Trp492.

In the N-terminal section; belongs to the PMEI family. The protein in the C-terminal section; belongs to the pectinesterase family. In terms of tissue distribution, in the peel, expression is localized to the region of the flavedo close to the oil glands, and to the innermost layer of the albedo. In the lamella, expression is localized to the cell layers opposing the fruit tissue, and to the parenchyma surrounding the vascular tissue. In the fruit vesicles, expression is restricted to the peripheral cell layers and stalk cells. High levels of expression are detected in the core matrix.

The protein resides in the secreted. It localises to the cell wall. The enzyme catalyses [(1-&gt;4)-alpha-D-galacturonosyl methyl ester](n) + n H2O = [(1-&gt;4)-alpha-D-galacturonosyl](n) + n methanol + n H(+). It functions in the pathway glycan metabolism; pectin degradation; 2-dehydro-3-deoxy-D-gluconate from pectin: step 1/5. Functionally, acts in the modification of cell walls via demethylesterification of cell wall pectin. The polypeptide is Pectinesterase 3 (Citrus sinensis (Sweet orange)).